Consider the following 146-residue polypeptide: Prefoldin subunit alpha (146 aa).

This sequence belongs to the prefoldin alpha subunit family. Heterohexamer of two alpha and four beta subunits.

Its subcellular location is the cytoplasm. Molecular chaperone capable of stabilizing a range of proteins. Seems to fulfill an ATP-independent, HSP70-like function in archaeal de novo protein folding. This is Prefoldin subunit alpha from Methanobrevibacter smithii (strain ATCC 35061 / DSM 861 / OCM 144 / PS).